Reading from the N-terminus, the 64-residue chain is U-scoloptoxin(14)-Er1a (64 aa).

The first 23 residues, Met-1 to Gly-23, serve as a signal peptide directing secretion.

This sequence belongs to the scoloptoxin-14 family. Post-translationally, contains 4 disulfide bonds. In terms of tissue distribution, expressed by the venom gland.

Its subcellular location is the secreted. The sequence is that of U-scoloptoxin(14)-Er1a from Ethmostigmus rubripes (Giant centipede).